A 303-amino-acid polypeptide reads, in one-letter code: Heme A synthase (303 aa).

The Cytoplasmic portion of the chain corresponds to 1–8 (MFGKKNLK). The helical transmembrane segment at 9–29 (WLGVVATLMMTFVQLGGALVT) threads the bilayer. Over 30 to 67 (KTGSADGCGSSWPLCHGALIPEFFPIDTIIELSHRAVS) the chain is Extracellular. Cys-37 and Cys-44 are joined by a disulfide. Residue Glu-60 is part of the active site. His-63 contacts heme o. Residues 68-88 (ALSLLMVLWLVITAWKHIGYI) form a helical membrane-spanning segment. Over 89–93 (KEIKP) the chain is Cytoplasmic. Residues 94-114 (LSIISVGFLLLQALIGAAAVI) form a helical membrane-spanning segment. The Extracellular segment spans residues 115–125 (WQQNDYVLALH). A heme o-binding site is contributed by His-125. The helical transmembrane segment at 126 to 146 (FGISLISFSSVFLITLIIFSI) threads the bilayer. The Cytoplasmic segment spans residues 147 to 163 (DQKYEADELYIKKPLRR). The helical transmembrane segment at 164-184 (LTWLMAIIIYCGVYTGALVRH) threads the bilayer. At 185 to 215 (ADASLAYGGWPLPFHDLVPHSEQDWVQLTHR) the chain is on the extracellular side. His-214 contacts heme b. The helical transmembrane segment at 216–236 (IMAFIVFTIIMITYIHAVKNY) threads the bilayer. Over 237-244 (PNNRTVHY) the chain is Cytoplasmic. A helical transmembrane segment spans residues 245–265 (GYTAAFILVILQVITGALSIM). Over 266–270 (TNVNL) the chain is Extracellular. Residues 271–291 (IIALFHALFITYLFGMTTYFI) traverse the membrane as a helical segment. A heme b-binding site is contributed by His-276. The Cytoplasmic portion of the chain corresponds to 292-303 (MLMLRSVRSDKQ).

Belongs to the COX15/CtaA family. Type 1 subfamily. As to quaternary structure, interacts with CtaB. Heme b serves as cofactor.

It localises to the cell membrane. It carries out the reaction Fe(II)-heme o + 2 A + H2O = Fe(II)-heme a + 2 AH2. It participates in porphyrin-containing compound metabolism; heme A biosynthesis; heme A from heme O: step 1/1. Catalyzes the conversion of heme O to heme A by two successive hydroxylations of the methyl group at C8. The first hydroxylation forms heme I, the second hydroxylation results in an unstable dihydroxymethyl group, which spontaneously dehydrates, resulting in the formyl group of heme A. This Staphylococcus aureus (strain Mu3 / ATCC 700698) protein is Heme A synthase.